The sequence spans 206 residues: Large ribosomal subunit protein uL4 (206 aa).

The segment at Met-63 to His-98 is disordered. The span at Tyr-64–Ser-76 shows a compositional bias: basic residues.

It belongs to the universal ribosomal protein uL4 family. In terms of assembly, part of the 50S ribosomal subunit.

Its function is as follows. One of the primary rRNA binding proteins, this protein initially binds near the 5'-end of the 23S rRNA. It is important during the early stages of 50S assembly. It makes multiple contacts with different domains of the 23S rRNA in the assembled 50S subunit and ribosome. Forms part of the polypeptide exit tunnel. This is Large ribosomal subunit protein uL4 from Chelativorans sp. (strain BNC1).